A 572-amino-acid chain; its full sequence is Arginine--tRNA ligase (572 aa).

Residues 122-132 carry the 'HIGH' region motif; sequence PNLAKEMHVGH.

It belongs to the class-I aminoacyl-tRNA synthetase family. Monomer.

It localises to the cytoplasm. It catalyses the reaction tRNA(Arg) + L-arginine + ATP = L-arginyl-tRNA(Arg) + AMP + diphosphate. This is Arginine--tRNA ligase from Neisseria meningitidis serogroup A / serotype 4A (strain DSM 15465 / Z2491).